Consider the following 393-residue polypeptide: Succinate--CoA ligase [ADP-forming] subunit beta (393 aa).

The ATP-grasp domain occupies 9–237; the sequence is RDLFAKHGVP…KDAANPLEAA (229 aa). ATP-binding positions include Lys-45, 52–54, Glu-92, Pro-95, and Glu-100; that span reads GRG. The Mg(2+) site is built by Asn-192 and Asp-206. Residues Asn-257 and 319 to 321 contribute to the substrate site; that span reads GIT.

This sequence belongs to the succinate/malate CoA ligase beta subunit family. As to quaternary structure, heterotetramer of two alpha and two beta subunits. It depends on Mg(2+) as a cofactor.

The catalysed reaction is succinate + ATP + CoA = succinyl-CoA + ADP + phosphate. It catalyses the reaction GTP + succinate + CoA = succinyl-CoA + GDP + phosphate. It functions in the pathway carbohydrate metabolism; tricarboxylic acid cycle; succinate from succinyl-CoA (ligase route): step 1/1. Functionally, succinyl-CoA synthetase functions in the citric acid cycle (TCA), coupling the hydrolysis of succinyl-CoA to the synthesis of either ATP or GTP and thus represents the only step of substrate-level phosphorylation in the TCA. The beta subunit provides nucleotide specificity of the enzyme and binds the substrate succinate, while the binding sites for coenzyme A and phosphate are found in the alpha subunit. The chain is Succinate--CoA ligase [ADP-forming] subunit beta from Streptomyces griseus subsp. griseus (strain JCM 4626 / CBS 651.72 / NBRC 13350 / KCC S-0626 / ISP 5235).